The following is a 351-amino-acid chain: Keratocan (351 aa).

The signal sequence occupies residues Met-1–Thr-20. An LRRNT domain is found at Asp-34–Ser-72. Cystine bridges form between Cys-43–Cys-49 and Cys-47–Cys-59. LRR repeat units follow at residues Arg-73–Asn-94, Gln-97–Leu-118, Lys-123–Arg-143, Ser-144–Asn-165, Asn-168–Asp-181, Asn-194–Ala-214, Asn-215–Val-236, Lys-239–Gly-259, Ser-264–Ala-283, and Asn-284–Pro-305. The N-linked (GlcNAc...) (keratan sulfate) asparagine glycan is linked to Asn-94. An N-linked (GlcNAc...) (keratan sulfate) asparagine glycan is attached at Asn-168. Residue Asn-223 is glycosylated (N-linked (GlcNAc...) asparagine). N-linked (GlcNAc...) asparagine glycosylation occurs at Asn-299. Cys-304 and Cys-342 are joined by a disulfide.

The protein belongs to the small leucine-rich proteoglycan (SLRP) family. SLRP class II subfamily. Post-translationally, binds keratan sulfate chains. Selectively expressed in cornea of adult where it is detected in keratocytes but not in scleral cells. In embryo, first detected in periocular mesenchymal cells migrating toward developing cornea on 13.5 dpc; expression gradually restricted to corneal stromal cells on 14.5 to 18.5 dpc. Detected in scleral cells of 15.5 dpc but not in 18.5 dpc embryos.

The protein resides in the secreted. Its subcellular location is the extracellular space. It localises to the extracellular matrix. Its function is as follows. May be important in developing and maintaining corneal transparency and for the structure of the stromal matrix. This Mus musculus (Mouse) protein is Keratocan (Kera).